A 172-amino-acid polypeptide reads, in one-letter code: Adenine phosphoribosyltransferase (172 aa).

The protein belongs to the purine/pyrimidine phosphoribosyltransferase family. As to quaternary structure, homodimer.

It is found in the cytoplasm. The enzyme catalyses AMP + diphosphate = 5-phospho-alpha-D-ribose 1-diphosphate + adenine. It participates in purine metabolism; AMP biosynthesis via salvage pathway; AMP from adenine: step 1/1. Catalyzes a salvage reaction resulting in the formation of AMP, that is energically less costly than de novo synthesis. The protein is Adenine phosphoribosyltransferase of Staphylococcus epidermidis (strain ATCC 35984 / DSM 28319 / BCRC 17069 / CCUG 31568 / BM 3577 / RP62A).